A 65-amino-acid chain; its full sequence is Small ribosomal subunit protein bS21 (65 aa).

The disordered stretch occupies residues 44–65 (DDRLKRSRGKRRAQRANEERNS). Residues 48-57 (KRSRGKRRAQ) are compositionally biased toward basic residues.

Belongs to the bacterial ribosomal protein bS21 family.

In Prosthecochloris aestuarii (strain DSM 271 / SK 413), this protein is Small ribosomal subunit protein bS21.